Reading from the N-terminus, the 82-residue chain is MVTIRLSRGGAKKRPFYQIVVADSRSPRDGRFIERIGFFNPIATGNAERLRLDVAKVDAWVAKGASLSDRVAVLVKEARKAA.

Belongs to the bacterial ribosomal protein bS16 family.

This Glaesserella parasuis serovar 5 (strain SH0165) (Haemophilus parasuis) protein is Small ribosomal subunit protein bS16.